The sequence spans 229 residues: MWSLTVILLISYFLGSIPGALWSSKALHGVDIRNHGSHNCGATNAFRVVGWQAGALATVVDFGKGFLAAGVVASVIRIDPIPSGLSLFGGDPFVVLGLLAGVGAVIGHMYPIFARFEGGKGVNTAAGMLFALTPLTMAITLAVFVAVLLSSRYVSLSSITAAVAFPTIVALRRFGFGADLDPSLLVFGGLLALSIVVAHRSNIQRLLNGTESQISSFEPAQGMLGRGEL.

Transmembrane regions (helical) follow at residues 2–22 (WSLT…GALW), 56–76 (LATV…ASVI), 93–113 (FVVL…YPIF), 129–149 (LFAL…AVLL), 151–171 (SRYV…IVAL), and 178–198 (ADLD…IVVA).

This sequence belongs to the PlsY family. Probably interacts with PlsX.

It is found in the cell inner membrane. The enzyme catalyses an acyl phosphate + sn-glycerol 3-phosphate = a 1-acyl-sn-glycero-3-phosphate + phosphate. Its pathway is lipid metabolism; phospholipid metabolism. Catalyzes the transfer of an acyl group from acyl-phosphate (acyl-PO(4)) to glycerol-3-phosphate (G3P) to form lysophosphatidic acid (LPA). This enzyme utilizes acyl-phosphate as fatty acyl donor, but not acyl-CoA or acyl-ACP. This chain is Glycerol-3-phosphate acyltransferase, found in Salinibacter ruber (strain DSM 13855 / M31).